The following is a 314-amino-acid chain: DegV domain-containing protein XAC3508 (314 aa).

The DegV domain maps to 3–307 (IGIVVDSACD…KGALAVGFAA (305 aa)). 2 residues coordinate hexadecanoate: Thr63 and Ser96.

May bind long-chain fatty acids, such as palmitate, and may play a role in lipid transport or fatty acid metabolism. The protein is DegV domain-containing protein XAC3508 of Xanthomonas axonopodis pv. citri (strain 306).